The sequence spans 388 residues: Protein TsgA homolog (388 aa).

The next 12 helical transmembrane spans lie at 11 to 31 (WISF…GMIM), 50 to 70 (TFLN…IEII), 77 to 97 (IFSF…NSIF), 101 to 121 (INMF…TFII), 133 to 153 (LLLL…IVTA), 160 to 180 (IIWY…FLLT), 206 to 226 (VFLL…FISW), 244 to 264 (SLVS…SFII), 268 to 288 (NLYR…YCFI), 298 to 318 (YIII…ITLA), 332 to 352 (LILL…SPIV), and 360 to 380 (TLIS…LIYF).

The protein belongs to the major facilitator superfamily. TsgA family.

Its subcellular location is the cell membrane. This is Protein TsgA homolog from Buchnera aphidicola subsp. Acyrthosiphon pisum (strain Tuc7).